Reading from the N-terminus, the 20-residue chain is Pregnancy-associated glycoprotein 73B (20 aa).

Belongs to the peptidase A1 family. Post-translationally, N-glycosylated. In terms of tissue distribution, expressed in chorionic epithelium (trophectoderm).

It is found in the secreted. Its subcellular location is the extracellular space. This chain is Pregnancy-associated glycoprotein 73B, found in Bubalus bubalis (Domestic water buffalo).